The primary structure comprises 330 residues: Glycerol-3-phosphate dehydrogenase [NAD(P)+] (330 aa).

NADPH-binding residues include Ser-10, Trp-11, Arg-31, and Lys-104. Sn-glycerol 3-phosphate is bound by residues Lys-104, Gly-131, and Ser-133. Ala-135 is a binding site for NADPH. Sn-glycerol 3-phosphate is bound by residues Lys-186, Asp-239, Ser-249, Arg-250, and Asn-251. The active-site Proton acceptor is the Lys-186. Arg-250 is a binding site for NADPH. Positions 274 and 276 each coordinate NADPH.

The protein belongs to the NAD-dependent glycerol-3-phosphate dehydrogenase family.

The protein localises to the cytoplasm. It catalyses the reaction sn-glycerol 3-phosphate + NAD(+) = dihydroxyacetone phosphate + NADH + H(+). It carries out the reaction sn-glycerol 3-phosphate + NADP(+) = dihydroxyacetone phosphate + NADPH + H(+). It participates in membrane lipid metabolism; glycerophospholipid metabolism. Its function is as follows. Catalyzes the reduction of the glycolytic intermediate dihydroxyacetone phosphate (DHAP) to sn-glycerol 3-phosphate (G3P), the key precursor for phospholipid synthesis. The sequence is that of Glycerol-3-phosphate dehydrogenase [NAD(P)+] from Thermoanaerobacter sp. (strain X514).